The chain runs to 250 residues: MLGRFVANGRIYEGSFEIDGELLVFDGYEVPLTAVKFLPPVVPSKIIAVGLNYIDHAEELNMPVPEEPILFMKPSTAVIGHDDCIILPQISQRVDYEGELAVVIAEDCRNVPETNAADYILGYTCFNDVTARDLQAKDGQWTRAKSFDTFAPLGPYIAEIDDPSKLGIQTRVNGKVVQKSNTSNLIFDVFQLVSFVSSVMTLKAGDVIATGTPAGVGMLKDGDVVEVEIEKIGILRNTAVKIDRQIRCEC.

3 residues coordinate a divalent metal cation: glutamate 97, glutamate 99, and aspartate 128.

It belongs to the FAH family.

This is an uncharacterized protein from Archaeoglobus fulgidus (strain ATCC 49558 / DSM 4304 / JCM 9628 / NBRC 100126 / VC-16).